Consider the following 479-residue polypeptide: PRAME family member 18 (479 aa).

An LRR 1 repeat occupies 15–38; that stretch reads QSLLRDQALAISVLDELPRELFPP. One copy of the LRR 1; degenerate repeat lies at 97–124; that stretch reads RWKLQVLEMRDVDENFWTIWSGARLLSC. An LRR 2; degenerate repeat occupies 179–203; the sequence is HLCCTKVVNYSMSILNFRNILETVY. The LRR 3; degenerate repeat unit spans residues 204–230; it reads PDSIQVLEIWNMCWLCMIVEFSRYLSQ. The LRR 4; degenerate repeat unit spans residues 231 to 265; sequence MRNLRKLFISDGCRYLLSSDSQEQLVAEFSSVLLR. LRR repeat units lie at residues 266–291, 292–323, 324–342, 348–375, and 376–400; these read LENL…IRCL, RSPL…SQLK, QLNL…PLRA, AATL…ALSR, and CSNL…LLRH.

It belongs to the PRAME family.

This is PRAME family member 18 from Homo sapiens (Human).